Here is a 293-residue protein sequence, read N- to C-terminus: Probable aspartoacylase (293 aa).

2 residues coordinate Zn(2+): H14 and E17. Substrate-binding positions include R56 and 63 to 64 (NR). A Zn(2+)-binding site is contributed by H106. Substrate contacts are provided by E165 and Y276.

It belongs to the AspA/AstE family. Aspartoacylase subfamily. The cofactor is Zn(2+).

It carries out the reaction an N-acyl-L-aspartate + H2O = a carboxylate + L-aspartate. The polypeptide is Probable aspartoacylase (Trichodesmium erythraeum (strain IMS101)).